The primary structure comprises 147 residues: MNLKKYTDYALRVLIFTGLKSDQELANIKEIAEVYQISQEHLRKVVHELTKMELVVTIRGRNGGIKLAKPASEINIGLLIRQLENDFVLLECFDKGTNHCVISPGCTLKHVINKALVAFFKVLEEYTLEDLIKNEEELLALMGIEKV.

Positions 2–133 constitute an HTH rrf2-type domain; sequence NLKKYTDYAL…EEYTLEDLIK (132 aa). Residues 28 to 51 constitute a DNA-binding region (H-T-H motif); sequence IKEIAEVYQISQEHLRKVVHELTK. [2Fe-2S] cluster contacts are provided by C92, C100, and C106.

[2Fe-2S] cluster serves as cofactor.

In terms of biological role, nitric oxide-responsive transcriptional regulator. The polypeptide is HTH-type transcriptional regulator NsrR (nsrR) (Oceanobacillus iheyensis (strain DSM 14371 / CIP 107618 / JCM 11309 / KCTC 3954 / HTE831)).